The following is a 120-amino-acid chain: Glycine cleavage system H protein (120 aa).

Positions 17–99 (IATVGITSHA…QGAGWFFKLK (83 aa)) constitute a Lipoyl-binding domain. Lys58 is subject to N6-lipoyllysine.

It belongs to the GcvH family. The glycine cleavage system is composed of four proteins: P, T, L and H. It depends on (R)-lipoate as a cofactor.

Its function is as follows. The glycine cleavage system catalyzes the degradation of glycine. The H protein shuttles the methylamine group of glycine from the P protein to the T protein. The sequence is that of Glycine cleavage system H protein from Agrobacterium fabrum (strain C58 / ATCC 33970) (Agrobacterium tumefaciens (strain C58)).